We begin with the raw amino-acid sequence, 388 residues long: Succinate--CoA ligase [ADP-forming] subunit beta (388 aa).

Residues K46, 53–55, E99, C102, and E107 each bind ATP; that span reads GRG. N199 and D213 together coordinate Mg(2+). Residues N264 and 321–323 each bind substrate; that span reads GIV.

It belongs to the succinate/malate CoA ligase beta subunit family. Heterotetramer of two alpha and two beta subunits. Mg(2+) is required as a cofactor.

It carries out the reaction succinate + ATP + CoA = succinyl-CoA + ADP + phosphate. The enzyme catalyses GTP + succinate + CoA = succinyl-CoA + GDP + phosphate. It participates in carbohydrate metabolism; tricarboxylic acid cycle; succinate from succinyl-CoA (ligase route): step 1/1. Its function is as follows. Succinyl-CoA synthetase functions in the citric acid cycle (TCA), coupling the hydrolysis of succinyl-CoA to the synthesis of either ATP or GTP and thus represents the only step of substrate-level phosphorylation in the TCA. The beta subunit provides nucleotide specificity of the enzyme and binds the substrate succinate, while the binding sites for coenzyme A and phosphate are found in the alpha subunit. This is Succinate--CoA ligase [ADP-forming] subunit beta from Actinobacillus pleuropneumoniae serotype 5b (strain L20).